The sequence spans 398 residues: Cell division protein FtsZ (398 aa).

GTP contacts are provided by residues 24 to 28 (GAGGN), 111 to 113 (GTG), Glu154, Arg158, and Asp202. A disordered region spans residues 333–381 (GRNNKSETSPISQSEDSEKEKFKWPYSQSESTQDKTLETKPAEQVSEGA). Positions 364 to 373 (TQDKTLETKP) are enriched in basic and acidic residues.

It belongs to the FtsZ family. In terms of assembly, homodimer. Polymerizes to form a dynamic ring structure in a strictly GTP-dependent manner. Interacts directly with several other division proteins.

It localises to the cytoplasm. Functionally, essential cell division protein that forms a contractile ring structure (Z ring) at the future cell division site. The regulation of the ring assembly controls the timing and the location of cell division. One of the functions of the FtsZ ring is to recruit other cell division proteins to the septum to produce a new cell wall between the dividing cells. Binds GTP and shows GTPase activity. The polypeptide is Cell division protein FtsZ (Wolbachia sp).